Here is a 70-residue protein sequence, read N- to C-terminus: Large ribosomal subunit protein bL31 (70 aa).

Positions 16, 18, 37, and 40 each coordinate Zn(2+).

This sequence belongs to the bacterial ribosomal protein bL31 family. Type A subfamily. Part of the 50S ribosomal subunit. Zn(2+) is required as a cofactor.

In terms of biological role, binds the 23S rRNA. The chain is Large ribosomal subunit protein bL31 from Glaesserella parasuis serovar 5 (strain SH0165) (Haemophilus parasuis).